We begin with the raw amino-acid sequence, 434 residues long: Histidinol dehydrogenase (434 aa).

Substrate contacts are provided by S242, Q264, and H267. The Zn(2+) site is built by Q264 and H267. Catalysis depends on proton acceptor residues E332 and H333. The substrate site is built by H333, D366, E420, and H425. Position 366 (D366) interacts with Zn(2+). H425 lines the Zn(2+) pocket.

This sequence belongs to the histidinol dehydrogenase family. Requires Zn(2+) as cofactor.

The enzyme catalyses L-histidinol + 2 NAD(+) + H2O = L-histidine + 2 NADH + 3 H(+). The protein operates within amino-acid biosynthesis; L-histidine biosynthesis; L-histidine from 5-phospho-alpha-D-ribose 1-diphosphate: step 9/9. Functionally, catalyzes the sequential NAD-dependent oxidations of L-histidinol to L-histidinaldehyde and then to L-histidine. This Oleidesulfovibrio alaskensis (strain ATCC BAA-1058 / DSM 17464 / G20) (Desulfovibrio alaskensis) protein is Histidinol dehydrogenase.